A 239-amino-acid chain; its full sequence is DNA repair protein RecO (239 aa).

It belongs to the RecO family.

Involved in DNA repair and RecF pathway recombination. This chain is DNA repair protein RecO, found in Stenotrophomonas maltophilia (strain K279a).